An 832-amino-acid chain; its full sequence is Protein monoglycylase TTLL8 (832 aa).

Residues 1-13 (MSCPPTPNPPFRP) show a composition bias toward pro residues. 2 disordered regions span residues 1–84 (MSCP…QDLS) and 277–304 (GKSK…KLPS). 3 stretches are compositionally biased toward basic and acidic residues: residues 46 to 59 (QLRE…ERKK), 66 to 75 (DGDHKEENKL), and 280 to 299 (KKEE…ENPD). Positions 271-624 (YCSKVKGKSK…RKLDRNCDIG (354 aa)) constitute a TTL domain. Residues K397, 403–404 (RG), 435–438 (QKYI), 448–450 (KFD), and 492–493 (CN) each bind ATP. An a protein-binding site is contributed by R403. An L-glutamate-binding site is contributed by S495. The Mg(2+) site is built by D570, E583, and N585. An ATP-binding site is contributed by E583.

Mg(2+) serves as cofactor. As to expression, highly expressed in testis. Expressed in brain, heart, kidney, liver, lung, muscle, spleen and trachea. Expressed in sperm flagellum. In the brain, specifically expressed in ependymal cilia.

It is found in the cytoplasm. It localises to the cytoskeleton. Its subcellular location is the cell projection. The protein resides in the cilium. The protein localises to the cilium axoneme. It is found in the flagellum axoneme. It catalyses the reaction L-glutamyl-[protein] + glycine + ATP = glycyl-L-glutamyl-[protein] + ADP + phosphate + H(+). Monoglycylase which modifies both tubulin and non-tubulin proteins, adding a single glycine on the gamma-carboxyl groups of specific glutamate residues to generate monoglycine side chains within the C-terminal tail of target proteins. Not involved in elongation step of the polyglycylation reaction. Preferentially monoglycylates alpha-tubulin over beta-tubulin. Together with TTLL3, mediates microtubule glycylation of primary and motile cilia, which is essential for their stability and maintenance. Together with TTLL3, glycylates sperm flagella which regulates axonemal dynein motor activity, thereby controlling flagellar beat, directional sperm swimming and male fertility. Monoglycylates non-tubulin proteins such as ANP32A, ANP32B, SET, NCL and NAP1. The sequence is that of Protein monoglycylase TTLL8 from Mus musculus (Mouse).